The sequence spans 286 residues: 4-hydroxybenzoate octaprenyltransferase (286 aa).

The next 7 helical transmembrane spans lie at 21-40 (GTLL…AGGM), 96-116 (LFVI…GLVV), 142-162 (FLGV…TGEV), 167-187 (WWLF…YAMV), 210-230 (QIIG…GWSA), 235-255 (LYGL…MLIF), and 266-286 (FLNN…DYLF).

This sequence belongs to the UbiA prenyltransferase family. Mg(2+) is required as a cofactor.

It is found in the cell inner membrane. It carries out the reaction all-trans-octaprenyl diphosphate + 4-hydroxybenzoate = 4-hydroxy-3-(all-trans-octaprenyl)benzoate + diphosphate. Its pathway is cofactor biosynthesis; ubiquinone biosynthesis. Functionally, catalyzes the prenylation of para-hydroxybenzoate (PHB) with an all-trans polyprenyl group. Mediates the second step in the final reaction sequence of ubiquinone-8 (UQ-8) biosynthesis, which is the condensation of the polyisoprenoid side chain with PHB, generating the first membrane-bound Q intermediate 3-octaprenyl-4-hydroxybenzoate. The protein is 4-hydroxybenzoate octaprenyltransferase of Shewanella sp. (strain ANA-3).